A 250-amino-acid polypeptide reads, in one-letter code: 3-deoxy-manno-octulosonate cytidylyltransferase (250 aa).

This sequence belongs to the KdsB family.

It localises to the cytoplasm. The enzyme catalyses 3-deoxy-alpha-D-manno-oct-2-ulosonate + CTP = CMP-3-deoxy-beta-D-manno-octulosonate + diphosphate. It participates in nucleotide-sugar biosynthesis; CMP-3-deoxy-D-manno-octulosonate biosynthesis; CMP-3-deoxy-D-manno-octulosonate from 3-deoxy-D-manno-octulosonate and CTP: step 1/1. Its pathway is bacterial outer membrane biogenesis; lipopolysaccharide biosynthesis. Its function is as follows. Activates KDO (a required 8-carbon sugar) for incorporation into bacterial lipopolysaccharide in Gram-negative bacteria. In Francisella philomiragia subsp. philomiragia (strain ATCC 25017 / CCUG 19701 / FSC 153 / O#319-036), this protein is 3-deoxy-manno-octulosonate cytidylyltransferase.